The primary structure comprises 178 residues: Thymidine kinase (178 aa).

Residue 13–20 (GPMFAGKS) coordinates ATP. Glu-85 (proton acceptor) is an active-site residue. Residue Phe-115 coordinates substrate. Positions 140 and 143 each coordinate Zn(2+). 159 to 163 (IEIIG) is a substrate binding site. Zn(2+)-binding residues include Cys-172 and Cys-175.

Belongs to the thymidine kinase family.

The catalysed reaction is thymidine + ATP = dTMP + ADP + H(+). This is Thymidine kinase (TK) from Myxoma virus (strain Uriarra) (MYXV).